Reading from the N-terminus, the 91-residue chain is Small integral membrane protein 12 (91 aa).

Residues 12-34 form a helical membrane-spanning segment; the sequence is YAPYVTFPVAFVVGAVGYHLEWF.

Belongs to the SMIM12 family.

The protein resides in the membrane. This Danio rerio (Zebrafish) protein is Small integral membrane protein 12 (smim12).